Here is a 337-residue protein sequence, read N- to C-terminus: Quercetin 2,3-dioxygenase (337 aa).

Cupin type-2 domains are found at residues 55 to 110 and 226 to 281; these read KGDA…MQSH and PKGD…RLDS. Fe cation-binding residues include histidine 62, histidine 64, glutamate 69, histidine 103, histidine 234, histidine 236, glutamate 241, and histidine 275.

As to quaternary structure, homodimer. Requires Fe(2+) as cofactor.

The enzyme catalyses quercetin + O2 = 2-(3,4-dihydroxybenzoyloxy)-4,6-dihydroxybenzoate + CO. The protein operates within flavonoid metabolism; quercetin degradation. Performs the first step in the degradation of the flavonoid quercetin by a dioxygenase reaction. The enzyme catalyzes the cleavage of the O-heteroaromatic ring of the flavonol quercetin yielding the depside 2-protocatechuoyl-phloroglucinol carboxylic acid and carbon monoxide. This involves the remarkable dioxygenolytic cleavage of two carbon-carbon bonds. This chain is Quercetin 2,3-dioxygenase (qdoI), found in Bacillus subtilis (strain 168).